The primary structure comprises 627 residues: DNA mismatch repair protein MutL (627 aa).

The disordered stretch occupies residues 376 to 404 (APASTNEVREGSAARAGNYQPPEPPSREA).

It belongs to the DNA mismatch repair MutL/HexB family.

This protein is involved in the repair of mismatches in DNA. It is required for dam-dependent methyl-directed DNA mismatch repair. May act as a 'molecular matchmaker', a protein that promotes the formation of a stable complex between two or more DNA-binding proteins in an ATP-dependent manner without itself being part of a final effector complex. The sequence is that of DNA mismatch repair protein MutL from Aeromonas salmonicida (strain A449).